Reading from the N-terminus, the 91-residue chain is Small ribosomal subunit protein bS20 (91 aa).

Belongs to the bacterial ribosomal protein bS20 family.

Functionally, binds directly to 16S ribosomal RNA. The chain is Small ribosomal subunit protein bS20 from Caulobacter vibrioides (strain ATCC 19089 / CIP 103742 / CB 15) (Caulobacter crescentus).